The sequence spans 261 residues: Imidazole glycerol phosphate synthase subunit HisF (261 aa).

Active-site residues include Asp16 and Asp135.

It belongs to the HisA/HisF family. Heterodimer of HisH and HisF.

The protein resides in the cytoplasm. The enzyme catalyses 5-[(5-phospho-1-deoxy-D-ribulos-1-ylimino)methylamino]-1-(5-phospho-beta-D-ribosyl)imidazole-4-carboxamide + L-glutamine = D-erythro-1-(imidazol-4-yl)glycerol 3-phosphate + 5-amino-1-(5-phospho-beta-D-ribosyl)imidazole-4-carboxamide + L-glutamate + H(+). It participates in amino-acid biosynthesis; L-histidine biosynthesis; L-histidine from 5-phospho-alpha-D-ribose 1-diphosphate: step 5/9. IGPS catalyzes the conversion of PRFAR and glutamine to IGP, AICAR and glutamate. The HisF subunit catalyzes the cyclization activity that produces IGP and AICAR from PRFAR using the ammonia provided by the HisH subunit. This chain is Imidazole glycerol phosphate synthase subunit HisF, found in Mycolicibacterium smegmatis (strain ATCC 700084 / mc(2)155) (Mycobacterium smegmatis).